The sequence spans 313 residues: Ribosomal RNA small subunit methyltransferase H (313 aa).

S-adenosyl-L-methionine contacts are provided by residues 35–37 (GGY), Asp53, Phe80, Asp101, and Gln108.

This sequence belongs to the methyltransferase superfamily. RsmH family.

The protein resides in the cytoplasm. The catalysed reaction is cytidine(1402) in 16S rRNA + S-adenosyl-L-methionine = N(4)-methylcytidine(1402) in 16S rRNA + S-adenosyl-L-homocysteine + H(+). Functionally, specifically methylates the N4 position of cytidine in position 1402 (C1402) of 16S rRNA. The chain is Ribosomal RNA small subunit methyltransferase H from Acidiphilium cryptum (strain JF-5).